We begin with the raw amino-acid sequence, 192 residues long: Fe/S biogenesis protein NfuA (192 aa).

[4Fe-4S] cluster-binding residues include Cys149 and Cys152.

This sequence belongs to the NfuA family. As to quaternary structure, homodimer. It depends on [4Fe-4S] cluster as a cofactor.

In terms of biological role, involved in iron-sulfur cluster biogenesis. Binds a 4Fe-4S cluster, can transfer this cluster to apoproteins, and thereby intervenes in the maturation of Fe/S proteins. Could also act as a scaffold/chaperone for damaged Fe/S proteins. The sequence is that of Fe/S biogenesis protein NfuA from Shewanella sediminis (strain HAW-EB3).